Consider the following 437-residue polypeptide: Amino-acid acetyltransferase (437 aa).

The N-acetyltransferase domain maps to 289–429 (ENIRLATSFD…EHYNYQRMSK (141 aa)).

The protein belongs to the acetyltransferase family. ArgA subfamily.

It localises to the cytoplasm. The catalysed reaction is L-glutamate + acetyl-CoA = N-acetyl-L-glutamate + CoA + H(+). It participates in amino-acid biosynthesis; L-arginine biosynthesis; N(2)-acetyl-L-ornithine from L-glutamate: step 1/4. This Actinobacillus pleuropneumoniae serotype 3 (strain JL03) protein is Amino-acid acetyltransferase.